The sequence spans 390 residues: MKFVDEAVVKVQAGDGGSGVVSFWREKFITKGGPDGGDGGDGGDVYIQADENLNTLIDYRFQRFYEAERGENGRGGNCTGKRGKDIVLRVPVGTRAVDIHTNEIVAEVAEHGKKVMVAKGGWHGLGNTRFKSSVNRAPRQRTLGTKGEIREIRLELLLLADVGMLGLPNAGKSTFIRAVSAAKPKVADYPFTTLIPSLGVVSVVPEKSFVVADIPGLIEGAADGAGLGIRFLKHLERCRVLLHMIDIMPIDQSDPVQNALTIIDELEQYSEKLASKPRWLVFNKVDLMPEEEANEKIQEILDALGWEDEYFKISAINRSGTKELCYKLADFMENLPREEEEVAEEDKVNFMWDDYHKDAMAGKDVVTEDDDDWDDWDDEEDDGHVVYVRD.

The region spanning 1-159 is the Obg domain; that stretch reads MKFVDEAVVK…REIRLELLLL (159 aa). Residues 160 to 333 enclose the OBG-type G domain; sequence ADVGMLGLPN…LCYKLADFME (174 aa). Residues 166–173, 191–195, 213–216, 283–286, and 314–316 each bind GTP; these read GLPNAGKS, FTTLI, DIPG, NKVD, and SAI. Positions 173 and 193 each coordinate Mg(2+). Residues 367–382 are compositionally biased toward acidic residues; sequence TEDDDDWDDWDDEEDD. The disordered stretch occupies residues 367 to 390; the sequence is TEDDDDWDDWDDEEDDGHVVYVRD.

Belongs to the TRAFAC class OBG-HflX-like GTPase superfamily. OBG GTPase family. As to quaternary structure, monomer. It depends on Mg(2+) as a cofactor.

It localises to the cytoplasm. Functionally, an essential GTPase which binds GTP, GDP and possibly (p)ppGpp with moderate affinity, with high nucleotide exchange rates and a fairly low GTP hydrolysis rate. Plays a role in control of the cell cycle, stress response, ribosome biogenesis and in those bacteria that undergo differentiation, in morphogenesis control. The polypeptide is GTPase Obg (Vibrio parahaemolyticus serotype O3:K6 (strain RIMD 2210633)).